The primary structure comprises 503 residues: Probable cytosol aminopeptidase (503 aa).

Mn(2+) is bound by residues lysine 271 and aspartate 276. Residue lysine 283 is part of the active site. Residues aspartate 294, aspartate 353, and glutamate 355 each contribute to the Mn(2+) site. Residue arginine 357 is part of the active site.

This sequence belongs to the peptidase M17 family. Requires Mn(2+) as cofactor.

The protein resides in the cytoplasm. It catalyses the reaction Release of an N-terminal amino acid, Xaa-|-Yaa-, in which Xaa is preferably Leu, but may be other amino acids including Pro although not Arg or Lys, and Yaa may be Pro. Amino acid amides and methyl esters are also readily hydrolyzed, but rates on arylamides are exceedingly low.. It carries out the reaction Release of an N-terminal amino acid, preferentially leucine, but not glutamic or aspartic acids.. Its function is as follows. Presumably involved in the processing and regular turnover of intracellular proteins. Catalyzes the removal of unsubstituted N-terminal amino acids from various peptides. In Chlorobium phaeobacteroides (strain DSM 266 / SMG 266 / 2430), this protein is Probable cytosol aminopeptidase.